A 396-amino-acid chain; its full sequence is S-adenosylmethionine synthase (396 aa).

His-15 serves as a coordination point for ATP. Asp-17 lines the Mg(2+) pocket. Glu-43 serves as a coordination point for K(+). The L-methionine site is built by Glu-56 and Gln-99. The segment at 99–109 is flexible loop; that stretch reads QSADIALGVDR. Residues 175–177, 241–242, Asp-250, 256–257, Ala-273, and Lys-277 each bind ATP; these read DGK, RF, and RK. Asp-250 contributes to the L-methionine binding site. Position 281 (Lys-281) interacts with L-methionine.

This sequence belongs to the AdoMet synthase family. Homotetramer; dimer of dimers. Requires Mg(2+) as cofactor. It depends on K(+) as a cofactor.

Its subcellular location is the cytoplasm. It carries out the reaction L-methionine + ATP + H2O = S-adenosyl-L-methionine + phosphate + diphosphate. The protein operates within amino-acid biosynthesis; S-adenosyl-L-methionine biosynthesis; S-adenosyl-L-methionine from L-methionine: step 1/1. Functionally, catalyzes the formation of S-adenosylmethionine (AdoMet) from methionine and ATP. The overall synthetic reaction is composed of two sequential steps, AdoMet formation and the subsequent tripolyphosphate hydrolysis which occurs prior to release of AdoMet from the enzyme. The sequence is that of S-adenosylmethionine synthase from Desulfitobacterium hafniense (strain DSM 10664 / DCB-2).